The chain runs to 502 residues: MSNIGAITQIIGPIIDVSFENSGKLPAILNALEVTKADGQKIVLECQQHLGQYAVRTIAMHETEGLVRGMKVVDTGAAIQMPVGEAIRGRLFNVIGEAIDGLPQPKTQQKLPIHRPAPKFKDISTATEVLYTGIKVIDLLAPYVKGGKIGLFGGAGVGKTVLIMELIDNIAKSYAGLSVFAGVGERTREGNDLLREMIESGVINYGEEFRKSMEAGGWDLSKVDREALNKSHATLVFGQMNESPGARARVALTGLTAAEYFRDGNGQEKGKDVLLFIDNIFRFTQAGSEVSTLLGRMPSAVGYQPTLATEMGAMQERITSVKNGSITSVQAVYVPADDLTDPAPATTFAHLDATTVLSRKIASLGIYPAVDPLESSSRILNPEVLGEIHYNTAQRVKNILQRYKELQDIIAILGMDELSEEDVKIVYRARRVQRFFSQPFHVAEQFTGLKGMRVSIEDTIKGFNMIINGELDHLPEAAFNLVGTIEQAIEKGEKMLKEAIPS.

Residue glycine 153 to threonine 160 participates in ATP binding.

The protein belongs to the ATPase alpha/beta chains family. F-type ATPases have 2 components, CF(1) - the catalytic core - and CF(0) - the membrane proton channel. CF(1) has five subunits: alpha(3), beta(3), gamma(1), delta(1), epsilon(1). CF(0) has three main subunits: a(1), b(2) and c(9-12). The alpha and beta chains form an alternating ring which encloses part of the gamma chain. CF(1) is attached to CF(0) by a central stalk formed by the gamma and epsilon chains, while a peripheral stalk is formed by the delta and b chains.

The protein localises to the cell membrane. It carries out the reaction ATP + H2O + 4 H(+)(in) = ADP + phosphate + 5 H(+)(out). Its function is as follows. Produces ATP from ADP in the presence of a proton gradient across the membrane. The catalytic sites are hosted primarily by the beta subunits. This is ATP synthase subunit beta from Amoebophilus asiaticus (strain 5a2).